The following is a 678-amino-acid chain: PTS system glucose-specific EIICBA component (678 aa).

Residues 3–414 (KKLFGQLQRI…FKYKTPGRED (412 aa)) form the PTS EIIC type-1 domain. The next 11 helical transmembrane spans lie at 16–36 (LMLP…GTAM), 63–83 (AGGI…AIGL), 89–109 (VAAI…GAFL), 126–146 (VLGI…GALA), 170–190 (FVPI…AWIW), 211–231 (LAVF…LHHI), 273–293 (FMQG…LAIY), 303–323 (VVAG…ITEP), 329–349 (LFVA…SFLI), 355–375 (VHLG…GVLP), and 382–402 (LVIP…RFLI). The PTS EIIB type-1 domain occupies 425-506 (SELPFNVLKA…SLIMKGEITK (82 aa)). Catalysis depends on Cys-447, which acts as the Phosphocysteine intermediate; for EIIB activity. The 105-residue stretch at 547 to 651 (DQVFAQKMMG…STVTPLIITN (105 aa)) folds into the PTS EIIA type-1 domain. His-599 (tele-phosphohistidine intermediate; for EIIA activity) is an active-site residue.

The protein localises to the cell membrane. The enzyme catalyses N(pros)-phospho-L-histidyl-[protein] + D-glucose(out) = D-glucose 6-phosphate(in) + L-histidyl-[protein]. Its function is as follows. The phosphoenolpyruvate-dependent sugar phosphotransferase system (sugar PTS), a major carbohydrate active transport system, catalyzes the phosphorylation of incoming sugar substrates concomitantly with their translocation across the cell membrane. This system is involved in glucose transport. This chain is PTS system glucose-specific EIICBA component (ptsG), found in Staphylococcus saprophyticus subsp. saprophyticus (strain ATCC 15305 / DSM 20229 / NCIMB 8711 / NCTC 7292 / S-41).